Reading from the N-terminus, the 551-residue chain is E-selectin (551 aa).

Residues 1-23 (MVASWLLSTLTFALVLLIKETST) form the signal peptide. The C-type lectin domain maps to 24-141 (WTYHFSAENM…CSKKKLALCY (118 aa)). At 24–495 (WTYHFSAENM…CEEPIASNVP (472 aa)) the chain is on the extracellular side. N-linked (GlcNAc...) asparagine glycosylation is found at Asn-32 and Asn-45. 17 disulfide bridges follow: Cys-42–Cys-140, Cys-113–Cys-132, Cys-145–Cys-156, Cys-150–Cys-165, Cys-167–Cys-176, Cys-182–Cys-226, Cys-195–Cys-208, Cys-212–Cys-239, Cys-244–Cys-288, Cys-257–Cys-270, Cys-274–Cys-301, Cys-306–Cys-351, Cys-337–Cys-364, Cys-369–Cys-414, Cys-400–Cys-427, Cys-432–Cys-473, and Cys-459–Cys-486. Ca(2+) contacts are provided by Glu-103, Asn-105, and Glu-111. Residues 103 to 111 (EPNNKQNNE), 115 to 120 (EIYIKR), and 128 to 130 (NDE) contribute to the a carbohydrate site. Ca(2+)-binding residues include Asn-128 and Asp-129. An EGF-like domain is found at 142 to 177 (TAACTEASCSGHGECIETINNYSCKCYPGFSGLKCE). N-linked (GlcNAc...) asparagine glycosylation is present at Asn-162. Sushi domains lie at 180–241 (VTCE…TCKV), 242–303 (VECD…TCKA), 305–366 (SCDT…VCEA), 368–429 (KCDP…SCQV), and 430–488 (VQCP…TCEE). 3 N-linked (GlcNAc...) asparagine glycosylation sites follow: Asn-194, Asn-201, and Asn-205. An N-linked (GlcNAc...) asparagine glycan is attached at Asn-267. Residues Asn-314, Asn-321, and Asn-334 are each glycosylated (N-linked (GlcNAc...) asparagine). 2 N-linked (GlcNAc...) asparagine glycosylation sites follow: Asn-442 and Asn-466. Residues 496-517 (LAVGLSVSGTSFLTLTSFLLWF) traverse the membrane as a helical segment. Residues 518–551 (LKYFRKKAKKFVPASSRYVGLEAHGNCQVPSHLI) are Cytoplasmic-facing.

The protein belongs to the selectin/LECAM family. In terms of assembly, interacts with SELPLG/PSGL1 and PODXL2 through the sialyl Lewis X epitope. SELPLG sulfation appears not to be required for this interaction.

It is found in the cell membrane. In terms of biological role, cell-surface glycoprotein having a role in immunoadhesion. Mediates in the adhesion of blood neutrophils in cytokine-activated endothelium through interaction with SELPLG/PSGL1. May have a role in capillary morphogenesis. This Oryctolagus cuniculus (Rabbit) protein is E-selectin (SELE).